The primary structure comprises 442 residues: tRNA modification GTPase MnmE (442 aa).

Residues Arg-22, Glu-79, and Lys-119 each coordinate (6S)-5-formyl-5,6,7,8-tetrahydrofolate. Residues 216-366 form the TrmE-type G domain; it reads GIKTCLVGAP…LLEKIKSIFA (151 aa). Asn-226 lines the K(+) pocket. GTP contacts are provided by residues 226 to 231, 245 to 251, and 270 to 273; these read NSGKSS, SEIPGTT, and DTAG. Mg(2+) is bound at residue Ser-230. K(+) contacts are provided by Ser-245, Ile-247, and Thr-250. Thr-251 is a binding site for Mg(2+). Residue Lys-442 participates in (6S)-5-formyl-5,6,7,8-tetrahydrofolate binding.

The protein belongs to the TRAFAC class TrmE-Era-EngA-EngB-Septin-like GTPase superfamily. TrmE GTPase family. In terms of assembly, homodimer. Heterotetramer of two MnmE and two MnmG subunits. It depends on K(+) as a cofactor.

It localises to the cytoplasm. In terms of biological role, exhibits a very high intrinsic GTPase hydrolysis rate. Involved in the addition of a carboxymethylaminomethyl (cmnm) group at the wobble position (U34) of certain tRNAs, forming tRNA-cmnm(5)s(2)U34. The protein is tRNA modification GTPase MnmE of Mesomycoplasma hyopneumoniae (strain 7448) (Mycoplasma hyopneumoniae).